Here is a 309-residue protein sequence, read N- to C-terminus: DSC E3 ubiquitin ligase complex subunit C (309 aa).

A glycan (N-linked (GlcNAc...) asparagine) is linked at asparagine 61. 2 disordered regions span residues 88–110 (LPPS…GKGK) and 148–177 (EQAD…FDRL). The next 2 helical transmembrane spans lie at 257 to 277 (DDML…AMWL) and 289 to 309 (GLAV…RIMN).

The protein belongs to the dsc3 family. As to quaternary structure, component of the DSC E3 ubiquitin ligase complex composed of dscA, dscB, dscC and dscD.

The protein localises to the endoplasmic reticulum membrane. Its pathway is protein modification; protein ubiquitination. Its function is as follows. Component of the DSC E3 ubiquitin ligase complex which is required for the srbA transcriptional activator proteolytic cleavage to release the soluble transcription factor from the membrane in low oxygen or sterol conditions. Required for growth during hypoxia and triazole drug susceptibility, as well as for virulence in a murine model of invasive pulmonary aspergillosis (IPA). In Aspergillus fumigatus (strain ATCC MYA-4609 / CBS 101355 / FGSC A1100 / Af293) (Neosartorya fumigata), this protein is DSC E3 ubiquitin ligase complex subunit C.